The primary structure comprises 321 residues: uncharacterized protein (321 aa).

It belongs to the carbohydrate kinase PfkB family.

This is an uncharacterized protein from Escherichia coli (strain K12).